Reading from the N-terminus, the 336-residue chain is Potassium channel subfamily K member 1 (336 aa).

Over 1 to 20 (MLQSLAGSSCVRLVERHRSA) the chain is Cytoplasmic. The chain crosses the membrane as a helical span at residues 21–41 (RCFGFLVLGYLLYLVFGAVVF). The Extracellular portion of the chain corresponds to 42 to 103 (SSVELPYEDL…SNASGNWNWD (62 aa)). N-linked (GlcNAc...) asparagine glycosylation is present at N95. Positions 104–116 (FTSALFFASTVLS) form an intramembrane region, helical. The stretch at 117 to 122 (TTGYGH) is an intramembrane region. The tract at residues 117–122 (TTGYGH) is selectivity filter 1. The Extracellular portion of the chain corresponds to 123-132 (TVPLSDGGKA). Residues 133-156 (FCIIYSVIGIPFTLLFLTAVVQRI) form a helical membrane-spanning segment. Over 157–181 (TVHVTRRPVLYFHIRWGFSKQVVAI) the chain is Cytoplasmic. A helical membrane pass occupies residues 182-202 (VHAVLLGFVTVSCFFFIPAAV). Over 203–211 (FSVLEDDWN) the chain is Extracellular. Positions 212-224 (FLESFYFCFISLS) form an intramembrane region, helical. Residues 225-230 (TIGLGD) form a selectivity filter 2 region. Residues 225-231 (TIGLGDY) lie within the membrane without spanning it. Over 232–243 (VPGEGYNQKFRE) the chain is Extracellular. The helical transmembrane segment at 244–267 (LYKIGITCYLLLGLIAMLVVLETF) threads the bilayer. The Cytoplasmic portion of the chain corresponds to 268 to 336 (CELHELKKFR…SACMDGPANH (69 aa)). Residue K274 forms a Glycyl lysine isopeptide (Lys-Gly) (interchain with G-Cter in SUMO) linkage. Positions 293–299 (IIEHDQL) are important for intracellular retention in recycling endosomes. Residues 315–336 (QKQNEPFVATQSSACMDGPANH) form a disordered region. S326 is modified (phosphoserine).

Belongs to the two pore domain potassium channel (TC 1.A.1.8) family. Homodimer; disulfide-linked. Heterodimer with KCNK2; disulfide-linked. In astrocytes, forms mostly heterodimeric potassium channels with KCNK2, with only a minor proportion of functional channels containing homodimeric KCNK1. Interacts with KCNK3 and KCNK9, forming functional heterodimeric channels. Interacts with GNG4. Identified in a complex with PSD and ARF6; interacts only with PSD that is bound to ARF6. Interacts with UBE2I. In terms of processing, sumoylation is controversial. Sumoylated by UBE2I. Not sumoylated when expressed in xenopus oocytes or mammalian cells. Sumoylation inactivates the channel, but does not interfere with expression at the cell membrane. Sumoylation of a single subunit is sufficient to silence the dimeric channel. Sumoylation of KCNK1 is sufficient to silence heterodimeric channels formed by KCNK1 and KCNK3 or KCNK9. Desumoylated by SENP1; this activates the channel. Desumoylated by SENP1; this strongly increases halothane-mediated activation of heterodimeric channels formed with KCNK9. SENP1 treatment has no effect.

Its subcellular location is the cell membrane. It is found in the recycling endosome. The protein localises to the synaptic cell membrane. The protein resides in the cytoplasmic vesicle. It localises to the perikaryon. Its subcellular location is the cell projection. It is found in the dendrite. The protein localises to the apical cell membrane. It catalyses the reaction K(+)(in) = K(+)(out). The enzyme catalyses NH4(+)(in) = NH4(+)(out). It carries out the reaction Na(+)(in) = Na(+)(out). The catalysed reaction is Rb(+)(in) = Rb(+)(out). It catalyses the reaction Cs(+)(in) = Cs(+)(out). The enzyme catalyses Li(+)(in) = Li(+)(out). It carries out the reaction L-glutamate(out) = L-glutamate(in). The catalysed reaction is chloride(in) = chloride(out). Functionally, ion channel that contributes to passive transmembrane potassium transport and to the regulation of the resting membrane potential in brain astrocytes, but also in kidney and in other tissues. Forms dimeric channels through which potassium ions pass in accordance with their electrochemical gradient. The channel is selective for K(+) ions at physiological potassium concentrations and at neutral pH, but becomes permeable to Na(+) at subphysiological K(+) levels, and upon acidification of the extracellular medium. The homodimer has very low potassium channel activity, when expressed in heterologous systems, and can function as weakly inward rectifying potassium channel. Channel activity is modulated by activation of serotonin receptors. Heterodimeric channels containing KCNK1 and KCNK2 have much higher activity, and may represent the predominant form in astrocytes. Heterodimeric channels containing KCNK1 and KCNK3 or KCNK9 have much higher activity. Heterodimeric channels formed by KCNK1 and KCNK9 may contribute to halothane-sensitive currents. Mediates outward rectifying potassium currents in dentate gyrus granule cells and contributes to the regulation of their resting membrane potential. Contributes to the regulation of action potential firing in dentate gyrus granule cells and down-regulates their intrinsic excitability. In astrocytes, the heterodimer formed by KCNK1 and KCNK2 is required for rapid glutamate release in response to activation of G-protein coupled receptors, such as F2R and CNR1. Required for normal ion and water transport in the kidney. Contributes to the regulation of the resting membrane potential of pancreatic beta cells. The low channel activity of homodimeric KCNK1 may be due to sumoylation. The low channel activity may be due to rapid internalization from the cell membrane and retention in recycling endosomes. Permeable to monovalent cations with ion selectivity for K(+) &gt; Rb(+) &gt;&gt; NH4(+) &gt;&gt; Cs(+) = Na(+) = Li(+). This chain is Potassium channel subfamily K member 1, found in Pongo abelii (Sumatran orangutan).